The primary structure comprises 243 residues: MSFTLLPAVDVADGQAVRLVQGAAGTETSYGDPLEAALAWQRAGAEWVHLVDLDAAFGRGSNRELLADVVAKLDVRVELSGGIRDDASLEAALATGCERVNLGTAALENPEWADRVVAEYGDRVAVGLDVRITEQGHRLAARGWTTDGGDLWEVLARLDAAGCRRYVVTDVSKDGTLQGPNVALLREVCSRTDAPVIASGGVSSVDDLVELSRLAGDGLEGSIVGKALYAGNFTLEEALAAVR.

Asp10 acts as the Proton acceptor in catalysis. Asp129 (proton donor) is an active-site residue.

This sequence belongs to the HisA/HisF family.

The protein resides in the cytoplasm. It catalyses the reaction 1-(5-phospho-beta-D-ribosyl)-5-[(5-phospho-beta-D-ribosylamino)methylideneamino]imidazole-4-carboxamide = 5-[(5-phospho-1-deoxy-D-ribulos-1-ylimino)methylamino]-1-(5-phospho-beta-D-ribosyl)imidazole-4-carboxamide. The protein operates within amino-acid biosynthesis; L-histidine biosynthesis; L-histidine from 5-phospho-alpha-D-ribose 1-diphosphate: step 4/9. This Saccharopolyspora erythraea (strain ATCC 11635 / DSM 40517 / JCM 4748 / NBRC 13426 / NCIMB 8594 / NRRL 2338) protein is 1-(5-phosphoribosyl)-5-[(5-phosphoribosylamino)methylideneamino] imidazole-4-carboxamide isomerase.